A 211-amino-acid chain; its full sequence is Probable GTP-binding protein EngB (211 aa).

The EngB-type G domain occupies 13–188; sequence SGYEIAFAGR…ASVMAGRLHF (176 aa). GTP is bound by residues 21–28, 48–52, 67–70, 134–137, and 167–169; these read GRSNAGKS, GRTQM, DLPG, TKAD, and FSS. Positions 28 and 50 each coordinate Mg(2+).

It belongs to the TRAFAC class TrmE-Era-EngA-EngB-Septin-like GTPase superfamily. EngB GTPase family. Mg(2+) serves as cofactor.

In terms of biological role, necessary for normal cell division and for the maintenance of normal septation. This is Probable GTP-binding protein EngB from Acinetobacter baumannii (strain ATCC 17978 / DSM 105126 / CIP 53.77 / LMG 1025 / NCDC KC755 / 5377).